The following is a 152-amino-acid chain: MSEKYIVTWDMLQIHARKLASRLMPSEQWKGIIAVSRGGLVPGALLARELGIRHVDTVCISSYDHDNQRELKVLKRAEGDGEGFIVIDDLVDTGGTAVAIREMYPKAHFVTIFAKPAGRPLVDDYVVDIPQNTWIEQPWDMGVVFVPPISGR.

5-phospho-alpha-D-ribose 1-diphosphate-binding positions include 37 to 38 (RG), Arg-69, and 88 to 96 (DDLVDTGGT). Arg-69 is a binding site for GMP. Position 89 (Asp-89) interacts with Mg(2+). 2 residues coordinate guanine: Asp-92 and Ile-135. Asp-92 and Ile-135 together coordinate xanthine. GMP is bound by residues 92 to 96 (DTGGT) and 134 to 135 (WI).

This sequence belongs to the purine/pyrimidine phosphoribosyltransferase family. XGPT subfamily. Homotetramer. The cofactor is Mg(2+).

The protein localises to the cell inner membrane. It carries out the reaction GMP + diphosphate = guanine + 5-phospho-alpha-D-ribose 1-diphosphate. The enzyme catalyses XMP + diphosphate = xanthine + 5-phospho-alpha-D-ribose 1-diphosphate. The catalysed reaction is IMP + diphosphate = hypoxanthine + 5-phospho-alpha-D-ribose 1-diphosphate. It participates in purine metabolism; GMP biosynthesis via salvage pathway; GMP from guanine: step 1/1. The protein operates within purine metabolism; XMP biosynthesis via salvage pathway; XMP from xanthine: step 1/1. Its function is as follows. Purine salvage pathway enzyme that catalyzes the transfer of the ribosyl-5-phosphate group from 5-phospho-alpha-D-ribose 1-diphosphate (PRPP) to the N9 position of the 6-oxopurines guanine and xanthine to form the corresponding ribonucleotides GMP (guanosine 5'-monophosphate) and XMP (xanthosine 5'-monophosphate), with the release of PPi. To a lesser extent, also acts on hypoxanthine. This is Xanthine-guanine phosphoribosyltransferase from Escherichia coli O127:H6 (strain E2348/69 / EPEC).